The chain runs to 360 residues: NAD(P)H-quinone oxidoreductase subunit 1, chloroplastic (360 aa).

The next 8 membrane-spanning stretches (helical) occupy residues Val27 to Ile47, Phe98 to Phe118, Ile129 to Gly149, Ala165 to Leu185, Phe203 to Leu223, Phe253 to Ile273, Val297 to Ile317, and Phe340 to Leu360.

It belongs to the complex I subunit 1 family. NDH is composed of at least 16 different subunits, 5 of which are encoded in the nucleus.

It is found in the plastid. Its subcellular location is the chloroplast thylakoid membrane. It carries out the reaction a plastoquinone + NADH + (n+1) H(+)(in) = a plastoquinol + NAD(+) + n H(+)(out). The catalysed reaction is a plastoquinone + NADPH + (n+1) H(+)(in) = a plastoquinol + NADP(+) + n H(+)(out). In terms of biological role, NDH shuttles electrons from NAD(P)H:plastoquinone, via FMN and iron-sulfur (Fe-S) centers, to quinones in the photosynthetic chain and possibly in a chloroplast respiratory chain. The immediate electron acceptor for the enzyme in this species is believed to be plastoquinone. Couples the redox reaction to proton translocation, and thus conserves the redox energy in a proton gradient. This is NAD(P)H-quinone oxidoreductase subunit 1, chloroplastic from Draba nemorosa (Woodland whitlowgrass).